Reading from the N-terminus, the 161-residue chain is Putative 2'-deoxynucleoside 5'-phosphate N-hydrolase 1 (161 aa).

Substrate is bound by residues 27 to 33, Y42, H60, E106, and 128 to 130; these read FLSGSIR and SSM.

The protein belongs to the 2'-deoxynucleoside 5'-phosphate N-hydrolase 1 family. As to quaternary structure, monomer and homodimer.

It catalyses the reaction a pyrimidine 2'-deoxyribonucleoside 5'-phosphate + H2O = a pyrimidine nucleobase + 2-deoxy-D-ribose 5-phosphate. It carries out the reaction a purine 2'-deoxyribonucleoside 5'-phosphate + H2O = a purine nucleobase + 2-deoxy-D-ribose 5-phosphate. In terms of biological role, catalyzes the cleavage of the N-glycosidic bond of deoxyribonucleoside 5'-monophosphates to yield deoxyribose 5-phosphate and a purine or pyrimidine base. This chain is Putative 2'-deoxynucleoside 5'-phosphate N-hydrolase 1, found in Methanosarcina mazei (strain ATCC BAA-159 / DSM 3647 / Goe1 / Go1 / JCM 11833 / OCM 88) (Methanosarcina frisia).